The primary structure comprises 50 residues: Bacterioferritin (50 aa).

Residues 1 to 50 (MKGDPKVIDYLNKALRHELTAINQYWLHYRLLDNWGIKDLAKKWRAESIE) enclose the Ferritin-like diiron domain. Glu-18 serves as a coordination point for Fe cation.

Belongs to the bacterioferritin family. As to quaternary structure, homooligomer of 24 subunits, arranged as 12 dimers, that are packed together to form an approximately spherical molecule with a central cavity, in which large amounts of iron can be deposited. The cofactor is heme b.

The enzyme catalyses 4 Fe(2+) + O2 + 4 H(+) = 4 Fe(3+) + 2 H2O. It carries out the reaction Fe(2+)(in) = Fe(2+)(out). Its function is as follows. Iron-storage protein, whose ferroxidase center binds Fe(2+), oxidizes it using dioxygen to Fe(3+), and participates in the subsequent Fe(3+) oxide mineral core formation within the central cavity of the BFR protein shell. May act as one of the electron carriers in the reverse electron-transport system from cytochrome c-552 to NADP(+). The chain is Bacterioferritin (bfr) from Nitrobacter winogradskyi (Nitrobacter agilis).